We begin with the raw amino-acid sequence, 1742 residues long: Unconventional myosin-Vc (1742 aa).

Alanine 2 carries the N-acetylalanine modification. In terms of domain architecture, Myosin N-terminal SH3-like spans 8-62 (TQYNRVWIPDPEEVWKSAEIAKDYRVGDKVLRLLLEDGTELDYSVNPESLPPLRN). The 687-residue stretch at 67–753 (VGENDLTALS…QVAYLEKLRL (687 aa)) folds into the Myosin motor domain. 161–168 (GESGAGKT) is a binding site for ATP. The actin-binding stretch occupies residues 632 to 654 (LYLLMETLNATTPHYVRCIKPND). IQ domains lie at 756–779 (LRQS…FLRE), 780–806 (RRAA…VALK), 807–829 (EAWA…LYQL), 830–854 (IRMA…RKML), and 855–884 (EEHK…FVLN). The stretch at 884–1351 (NIQLTYRVQR…SKTIGKANDV (468 aa)) forms a coiled coil. The 277-residue stretch at 1421 to 1697 (NSTINGIKQV…VRKVQALLNS (277 aa)) folds into the Dilute domain.

The protein belongs to the TRAFAC class myosin-kinesin ATPase superfamily. Myosin family. In terms of tissue distribution, expressed chiefly in non-neuronal tissues. Particularly abundant in epithelial and glandular tissues including pancreas, prostate, mammary, stomach, colon and lung.

In terms of biological role, may be involved in transferrin trafficking. Likely to power actin-based membrane trafficking in many physiologically crucial tissues. In Homo sapiens (Human), this protein is Unconventional myosin-Vc (MYO5C).